We begin with the raw amino-acid sequence, 347 residues long: Uroporphyrinogen decarboxylase (347 aa).

Residues 23-27, Asp73, Tyr150, Thr205, and His323 each bind substrate; that span reads RQAGR.

This sequence belongs to the uroporphyrinogen decarboxylase family. Homodimer.

The protein resides in the cytoplasm. The enzyme catalyses uroporphyrinogen III + 4 H(+) = coproporphyrinogen III + 4 CO2. The protein operates within porphyrin-containing compound metabolism; protoporphyrin-IX biosynthesis; coproporphyrinogen-III from 5-aminolevulinate: step 4/4. In terms of biological role, catalyzes the decarboxylation of four acetate groups of uroporphyrinogen-III to yield coproporphyrinogen-III. In Ruthia magnifica subsp. Calyptogena magnifica, this protein is Uroporphyrinogen decarboxylase.